The primary structure comprises 235 residues: MGDAATDAGMDAVQKRLMFEDKCILVDENDNVVGHDTKYNCHLMEKIESENLLHRAFSVFLFNSKYELLLQQRSATKVTFPLVWTNTCCSHPLYRESELIKENALGARNAAQRKLLDELGIPAEDVPVDQFIPLGRILYKAPSDGKWGEHELDYLLFIVRDVNVNPNPDEVADIKYVTRDQLKELLRKADAGEEGLKLSPWFRLVVDNFLFKWWDHVEKGTMHEAADMKSIHKLI.

Substrate is bound at residue K38. Mg(2+) is bound by residues H42 and H54. One can recognise a Nudix hydrolase domain in the interval 52–204 (LLHRAFSVFL…GLKLSPWFRL (153 aa)). Substrate is bound by residues R73 and K77. The active site involves C89. S90 lines the substrate pocket. The Mg(2+) site is built by E149 and E151. E151 is a catalytic residue.

The protein belongs to the IPP isomerase type 1 family. It depends on Mg(2+) as a cofactor.

It carries out the reaction isopentenyl diphosphate = dimethylallyl diphosphate. Its pathway is isoprenoid biosynthesis; dimethylallyl diphosphate biosynthesis; dimethylallyl diphosphate from isopentenyl diphosphate: step 1/1. It functions in the pathway porphyrin-containing compound metabolism; chlorophyll biosynthesis. In terms of biological role, catalyzes the 1,3-allylic rearrangement of the homoallylic substrate isopentenyl (IPP) to its highly electrophilic allylic isomer, dimethylallyl diphosphate (DMAPP). The chain is Isopentenyl-diphosphate Delta-isomerase I (IPI1) from Camptotheca acuminata (Happy tree).